The chain runs to 41 residues: Large ribosomal subunit protein bL36A (41 aa).

This sequence belongs to the bacterial ribosomal protein bL36 family.

The sequence is that of Large ribosomal subunit protein bL36A from Aeromonas salmonicida (strain A449).